The primary structure comprises 595 residues: Aspartate--tRNA(Asp/Asn) ligase (595 aa).

Residue Glu174 coordinates L-aspartate. Residues Gln198–Lys201 are aspartate. Arg220 contacts L-aspartate. Residues Arg220–Glu222 and Gln229 each bind ATP. Residue His452 coordinates L-aspartate. Position 486 (Glu486) interacts with ATP. An L-aspartate-binding site is contributed by Arg493. Residue Gly538–Arg541 coordinates ATP.

Belongs to the class-II aminoacyl-tRNA synthetase family. Type 1 subfamily. As to quaternary structure, homodimer.

The protein resides in the cytoplasm. It catalyses the reaction tRNA(Asx) + L-aspartate + ATP = L-aspartyl-tRNA(Asx) + AMP + diphosphate. In terms of biological role, aspartyl-tRNA synthetase with relaxed tRNA specificity since it is able to aspartylate not only its cognate tRNA(Asp) but also tRNA(Asn). Reaction proceeds in two steps: L-aspartate is first activated by ATP to form Asp-AMP and then transferred to the acceptor end of tRNA(Asp/Asn). The polypeptide is Aspartate--tRNA(Asp/Asn) ligase (Nitrosococcus oceani (strain ATCC 19707 / BCRC 17464 / JCM 30415 / NCIMB 11848 / C-107)).